Consider the following 355-residue polypeptide: UDP-3-O-acylglucosamine N-acyltransferase (355 aa).

The active-site Proton acceptor is H258.

The protein belongs to the transferase hexapeptide repeat family. LpxD subfamily. Homotrimer.

The enzyme catalyses a UDP-3-O-[(3R)-3-hydroxyacyl]-alpha-D-glucosamine + a (3R)-hydroxyacyl-[ACP] = a UDP-2-N,3-O-bis[(3R)-3-hydroxyacyl]-alpha-D-glucosamine + holo-[ACP] + H(+). It participates in bacterial outer membrane biogenesis; LPS lipid A biosynthesis. Functionally, catalyzes the N-acylation of UDP-3-O-acylglucosamine using 3-hydroxyacyl-ACP as the acyl donor. Is involved in the biosynthesis of lipid A, a phosphorylated glycolipid that anchors the lipopolysaccharide to the outer membrane of the cell. In Bradyrhizobium sp. (strain ORS 278), this protein is UDP-3-O-acylglucosamine N-acyltransferase.